Here is a 668-residue protein sequence, read N- to C-terminus: Probable potassium transport system protein Kup (668 aa).

12 helical membrane-spanning segments follow: residues 17 to 37, 59 to 79, 104 to 124, 148 to 168, 175 to 195, 221 to 241, 256 to 276, 299 to 319, 350 to 370, 380 to 400, 403 to 423, and 430 to 450; these read GILVAMGVVYGDIGTSPLYVM, VSLIFWTLTILTTIKYVVIAL, IIPAMIGGAALLADGVLTPAV, TIIVVITLTIILILFSVQRFG, AFGPIMFLWFTFLGIIGLMNF, LGLFILGNIFLATTGAEALYS, PYIKICLILNYLGQAAWLLTV, ILVFGVVFATIAAVIASQALI, MYIPAVNLILWLACSAIVLAF, YGLSITITMLMTTILLLFYLL, IPAWSAYLISLFFAAIEVVFF, and FFHGGYVAVGMAVFLLCIMII.

It belongs to the HAK/KUP transporter (TC 2.A.72) family.

It localises to the cell membrane. The enzyme catalyses K(+)(in) + H(+)(in) = K(+)(out) + H(+)(out). In terms of biological role, transport of potassium into the cell. Likely operates as a K(+):H(+) symporter. This Enterococcus faecalis (strain ATCC 700802 / V583) protein is Probable potassium transport system protein Kup.